A 138-amino-acid chain; its full sequence is ATP synthase epsilon chain (138 aa).

Belongs to the ATPase epsilon chain family. As to quaternary structure, F-type ATPases have 2 components, CF(1) - the catalytic core - and CF(0) - the membrane proton channel. CF(1) has five subunits: alpha(3), beta(3), gamma(1), delta(1), epsilon(1). CF(0) has three main subunits: a, b and c.

It is found in the cell membrane. Its function is as follows. Produces ATP from ADP in the presence of a proton gradient across the membrane. This is ATP synthase epsilon chain from Streptococcus uberis (strain ATCC BAA-854 / 0140J).